The sequence spans 343 residues: MALVSSRATQDSKPSRERIVPVVYYLSRNGRLDHPHFIEVPLSSHNGLYLKDVINRLNDLRGNGMACLYSWSSKRTYKNGFVWYDLSDEDFIFPVHGQEYVLKGSQILDLDNNSGNFSAVTHRRNQSWSSVDHYKVYKASELNAEATRKLSMDASTQTDDRRRRKSPVDEVNEVTELSREEITSPPQSDSSPETLESLMRADGRLILLQEDQELNRTVEKMRPSAVLMQLISCGAMSFKKCGPTLMNGNTRSTAVRGTGNYRLERAEKELKSFGRVKLEEKEYFSGSLIDESSKKELVPALKRSSSYNIDRSSRMGLTKEKEGEELARANFIPRNPNSVVGQP.

A DIX-like oligomerization domain region spans residues 18–109 (RIVPVVYYLS…YVLKGSQILD (92 aa)). Residues 148–194 (RKLSMDASTQTDDRRRRKSPVDEVNEVTELSREEITSPPQSDSSPET) form a disordered region. A compositionally biased stretch (polar residues) spans 184–194 (SPPQSDSSPET). The short motif at 233 to 234 (CG) is the Association to cell membranes element.

It belongs to the SOSEKI family. Homodimer. Forms long polymer filaments with other SOKs proteins polymers (e.g. SOK1, SOK2, SOK3 and SOK4) crucial for polar localization and biological activity. Binds to ANGUSTIFOLIA (AN). Expressed during embryogenesis and in roots.

It localises to the cell membrane. Functionally, SOSEKI proteins (SOK1-5) locally interpret global polarity cues and can influence cell division orientation to coordinate cell polarization relative to body axes, probably by guiding ANGUSTIFOLIA (AN) polarized localization. Positive regulator of auxin (indole-3-acetic acid, IAA) biosynthesis and signaling pathway leading to the modulation of seedling growth, plant and inflorescence development. Negative regulator of stress responses (e.g. salinity and osmotic stress). The sequence is that of Protein SOSEKI 4 from Arabidopsis thaliana (Mouse-ear cress).